Consider the following 349-residue polypeptide: Dihydroorotate dehydrogenase (quinone) (349 aa).

Residues 67-71 (AGLDK) and Thr-91 each bind FMN. Residue Lys-71 coordinates substrate. 116–120 (NRLGF) is a binding site for substrate. FMN-binding residues include Asn-147 and Asn-180. Residue Asn-180 coordinates substrate. Residue Ser-183 is the Nucleophile of the active site. Asn-185 contacts substrate. Residues Lys-225 and Thr-253 each contribute to the FMN site. 254–255 (NT) contributes to the substrate binding site. FMN-binding positions include Gly-276, Gly-305, and 326–327 (YT).

It belongs to the dihydroorotate dehydrogenase family. Type 2 subfamily. In terms of assembly, monomer. Requires FMN as cofactor.

The protein resides in the cell membrane. It carries out the reaction (S)-dihydroorotate + a quinone = orotate + a quinol. It functions in the pathway pyrimidine metabolism; UMP biosynthesis via de novo pathway; orotate from (S)-dihydroorotate (quinone route): step 1/1. Functionally, catalyzes the conversion of dihydroorotate to orotate with quinone as electron acceptor. The chain is Dihydroorotate dehydrogenase (quinone) from Bordetella avium (strain 197N).